Consider the following 405-residue polypeptide: Glutathione S-transferase LANCL1 (405 aa).

C282 is a binding site for Zn(2+). K323 is a binding site for glutathione. Residues C328 and H329 each contribute to the Zn(2+) site. Residue 370–373 (RTPD) coordinates glutathione.

The protein belongs to the LanC-like protein family.

Its subcellular location is the cytoplasm. The protein localises to the cell membrane. It catalyses the reaction RX + glutathione = an S-substituted glutathione + a halide anion + H(+). The enzyme catalyses 1-chloro-2,4-dinitrobenzene + glutathione = 2,4-dinitrophenyl-S-glutathione + chloride + H(+). Functions as a glutathione transferase. Catalyzes conjugation of the glutathione (GSH) to artificial substrates 1-chloro-2,4-dinitrobenzene (CDNB) and p-nitrophenyl acetate. Binds glutathione. The protein is Glutathione S-transferase LANCL1 of Danio rerio (Zebrafish).